The following is a 357-amino-acid chain: Non-structural protein NS2 (357 aa).

Disordered stretches follow at residues Q162–M199 and L228–I268. Composition is skewed to acidic residues over residues E230–E243 and D250–D260.

This sequence belongs to the orbivirus non-structural protein NS2 family.

Functionally, single-stranded RNA-binding protein. The chain is Non-structural protein NS2 (Segment-8) from Antilocapra americana (Pronghorn).